The chain runs to 242 residues: Zinc-finger homeodomain protein 13 (242 aa).

The ZF-HD dimerization-type; degenerate zinc finger occupies 64–111 (YYECRKNHAADIGTTAYDGCGEFVSSTGEEDSLNCAACGCHRNFHREE). Residues 144–166 (GGKSEGKKKKKEKESYGGDPIIK) form a disordered region. Positions 155–166 (EKESYGGDPIIK) are enriched in basic and acidic residues. Positions 179–238 (VKRLKTKFTAEQTEKMRDYAEKLRWKVRPERQEEVEEFCVEIGVNRKNFRIWMNNHKDKI) form a DNA-binding region, homeobox.

As to quaternary structure, homo- and heterodimer with other ZFHD proteins. Interacts with MIF1, MIF2 and MIF3; these interactions prevent nuclear localization and DNA-binding to inhibit transcription regulation activity. Binds to ZHD11. In terms of tissue distribution, mostly expressed in flowers.

The protein resides in the nucleus. Its function is as follows. Putative transcription factor. This is Zinc-finger homeodomain protein 13 (ZHD13) from Arabidopsis thaliana (Mouse-ear cress).